Consider the following 428-residue polypeptide: FAD-dependent monooxygenase kojA (428 aa).

FAD-binding positions include 52-60 (RLHKGPHYP) and 328-329 (SV).

This sequence belongs to the aromatic-ring hydroxylase family. FAD serves as cofactor.

Its function is as follows. Probable FAD-dependent monooxygenase; part of the gene cluster that mediates the biosynthesis of 5-hydroxy-2-hydroxymethyl-1,4-pyrone, also know as kojic acid, a by-product in the fermentation process of malting rice that acts as a chelation agent. Glucose might be converted to kojic acid by a combination of dehydrogenase and dehydratase reactions involving kojA and probably additional enzymes. The polypeptide is FAD-dependent monooxygenase kojA (Aspergillus flavus (strain ATCC 200026 / FGSC A1120 / IAM 13836 / NRRL 3357 / JCM 12722 / SRRC 167)).